The following is a 301-amino-acid chain: Methionyl-tRNA formyltransferase (301 aa).

Residue 109-112 (SILP) participates in (6S)-5,6,7,8-tetrahydrofolate binding.

It belongs to the Fmt family.

The catalysed reaction is L-methionyl-tRNA(fMet) + (6R)-10-formyltetrahydrofolate = N-formyl-L-methionyl-tRNA(fMet) + (6S)-5,6,7,8-tetrahydrofolate + H(+). Its function is as follows. Attaches a formyl group to the free amino group of methionyl-tRNA(fMet). The formyl group appears to play a dual role in the initiator identity of N-formylmethionyl-tRNA by promoting its recognition by IF2 and preventing the misappropriation of this tRNA by the elongation apparatus. The polypeptide is Methionyl-tRNA formyltransferase (Campylobacter curvus (strain 525.92)).